The chain runs to 269 residues: 3-methyl-2-oxobutanoate hydroxymethyltransferase (269 aa).

The Mg(2+) site is built by Asp-50 and Asp-89. Residues 50–51 (DS), Asp-89, and Lys-118 each bind 3-methyl-2-oxobutanoate. Glu-120 is a binding site for Mg(2+). Glu-187 acts as the Proton acceptor in catalysis.

It belongs to the PanB family. Homodecamer; pentamer of dimers. The cofactor is Mg(2+).

It is found in the cytoplasm. It carries out the reaction 3-methyl-2-oxobutanoate + (6R)-5,10-methylene-5,6,7,8-tetrahydrofolate + H2O = 2-dehydropantoate + (6S)-5,6,7,8-tetrahydrofolate. The protein operates within cofactor biosynthesis; (R)-pantothenate biosynthesis; (R)-pantoate from 3-methyl-2-oxobutanoate: step 1/2. Catalyzes the reversible reaction in which hydroxymethyl group from 5,10-methylenetetrahydrofolate is transferred onto alpha-ketoisovalerate to form ketopantoate. This is 3-methyl-2-oxobutanoate hydroxymethyltransferase from Aliarcobacter butzleri (strain RM4018) (Arcobacter butzleri).